Here is a 299-residue protein sequence, read N- to C-terminus: Tyrosine recombinase XerC (299 aa).

Residues Met1–Gln81 enclose the Core-binding (CB) domain. A Tyr recombinase domain is found at Leu102 to Asp281. Residues Arg142, Lys166, His233, Arg236, and His259 contribute to the active site. Residue Tyr268 is the O-(3'-phospho-DNA)-tyrosine intermediate of the active site.

Belongs to the 'phage' integrase family. XerC subfamily. As to quaternary structure, forms a cyclic heterotetrameric complex composed of two molecules of XerC and two molecules of XerD.

Its subcellular location is the cytoplasm. Its function is as follows. Site-specific tyrosine recombinase, which acts by catalyzing the cutting and rejoining of the recombining DNA molecules. The XerC-XerD complex is essential to convert dimers of the bacterial chromosome into monomers to permit their segregation at cell division. It also contributes to the segregational stability of plasmids. In Chromobacterium violaceum (strain ATCC 12472 / DSM 30191 / JCM 1249 / CCUG 213 / NBRC 12614 / NCIMB 9131 / NCTC 9757 / MK), this protein is Tyrosine recombinase XerC.